Reading from the N-terminus, the 174-residue chain is Secreted protein A (174 aa).

Positions 1–19 are cleaved as a signal peptide; the sequence is MRLLITLFAIFALFNCSLA. N-linked (GlcNAc...) asparagine glycosylation occurs at asparagine 156.

Belongs to the Sct family. Post-translationally, probably contains disulfide bonds.

The protein resides in the secreted. It localises to the extracellular vesicle. The polypeptide is Secreted protein A (p17) (Dictyostelium discoideum (Social amoeba)).